Here is a 222-residue protein sequence, read N- to C-terminus: 7-cyano-7-deazaguanine synthase (222 aa).

An ATP-binding site is contributed by 9-19 (LSGGLDSATAA). Zn(2+)-binding residues include Cys190, Cys198, Cys201, and Cys204.

Belongs to the QueC family. The cofactor is Zn(2+).

The enzyme catalyses 7-carboxy-7-deazaguanine + NH4(+) + ATP = 7-cyano-7-deazaguanine + ADP + phosphate + H2O + H(+). It participates in purine metabolism; 7-cyano-7-deazaguanine biosynthesis. Its function is as follows. Catalyzes the ATP-dependent conversion of 7-carboxy-7-deazaguanine (CDG) to 7-cyano-7-deazaguanine (preQ(0)). In Synechococcus sp. (strain RCC307), this protein is 7-cyano-7-deazaguanine synthase.